The primary structure comprises 227 residues: UPF0758 protein lpp2553 (227 aa).

The MPN domain occupies 102-225 (RLSNTQQTYA…YSIFAENKWV (124 aa)). Residues histidine 173, histidine 175, and aspartate 186 each contribute to the Zn(2+) site. The JAMM motif motif lies at 173-186 (HNHPSGLSDASQQD).

Belongs to the UPF0758 family.

In Legionella pneumophila (strain Paris), this protein is UPF0758 protein lpp2553.